A 204-amino-acid chain; its full sequence is Large ribosomal subunit protein uL4 (204 aa).

Residues 44–76 (KRQGTQSAKTRSEVRGGGIKPWRQKGTGRARQG) form a disordered region.

The protein belongs to the universal ribosomal protein uL4 family. Part of the 50S ribosomal subunit.

Functionally, one of the primary rRNA binding proteins, this protein initially binds near the 5'-end of the 23S rRNA. It is important during the early stages of 50S assembly. It makes multiple contacts with different domains of the 23S rRNA in the assembled 50S subunit and ribosome. In terms of biological role, forms part of the polypeptide exit tunnel. In Clostridium perfringens (strain 13 / Type A), this protein is Large ribosomal subunit protein uL4.